A 149-amino-acid chain; its full sequence is Transcriptional repressor NrdR (149 aa).

Residues 3–34 fold into a zinc finger; it reads CPFCGHAATQVIDTRMSEEGDTVRRRRRCESC. The 91-residue stretch at 49–139 folds into the ATP-cone domain; the sequence is PAVVKKNGSR…VYRSFEDVSE (91 aa).

Belongs to the NrdR family. Requires Zn(2+) as cofactor.

Functionally, negatively regulates transcription of bacterial ribonucleotide reductase nrd genes and operons by binding to NrdR-boxes. The sequence is that of Transcriptional repressor NrdR from Ralstonia nicotianae (strain ATCC BAA-1114 / GMI1000) (Ralstonia solanacearum).